The following is a 434-amino-acid chain: Glutamate-1-semialdehyde 2,1-aminomutase 1 (434 aa).

Lys270 carries the post-translational modification N6-(pyridoxal phosphate)lysine.

The protein belongs to the class-III pyridoxal-phosphate-dependent aminotransferase family. HemL subfamily. In terms of assembly, homodimer. It depends on pyridoxal 5'-phosphate as a cofactor.

The protein resides in the cytoplasm. The catalysed reaction is (S)-4-amino-5-oxopentanoate = 5-aminolevulinate. The protein operates within porphyrin-containing compound metabolism; protoporphyrin-IX biosynthesis; 5-aminolevulinate from L-glutamyl-tRNA(Glu): step 2/2. The protein is Glutamate-1-semialdehyde 2,1-aminomutase 1 of Bacillus thuringiensis subsp. konkukian (strain 97-27).